The sequence spans 225 residues: Peroxiredoxin-2E-2, chloroplastic (225 aa).

The N-terminal 42 residues, 1-42 (MAAPTAAALSTLSTASVTSGKRFITSSFSLSFSSRPLATGVR), are a transit peptide targeting the chloroplast. The region spanning 63–225 (IAVGDKLPDA…SSAEEMLKAL (163 aa)) is the Thioredoxin domain. C111 acts as the Cysteine sulfenic acid (-SOH) intermediate in catalysis.

The protein belongs to the peroxiredoxin family. Prx5 subfamily. As to quaternary structure, monomer.

The protein localises to the plastid. It localises to the chloroplast stroma. The catalysed reaction is [glutaredoxin]-dithiol + a hydroperoxide = [glutaredoxin]-disulfide + an alcohol + H2O. Thiol-specific peroxidase that catalyzes the reduction of hydrogen peroxide and organic hydroperoxides to water and alcohols, respectively. Plays a role in cell protection against oxidative stress by detoxifying peroxides. May be involved in chloroplast redox homeostasis. The protein is Peroxiredoxin-2E-2, chloroplastic (PRXIIE-2) of Oryza sativa subsp. japonica (Rice).